The primary structure comprises 424 residues: Serine/threonine-protein kinase H1 (424 aa).

Gly-2 carries N-myristoyl glycine lipidation. Residue Cys-3 is the site of S-palmitoyl cysteine attachment. Residues 49–81 are disordered; that stretch reads KGGFPAASQGANPSPGTPRTSHTEPPSEPPRRA. Polar residues predominate over residues 57 to 72; the sequence is QGANPSPGTPRTSHTE. The Protein kinase domain maps to 98-355; the sequence is YDIKALIGRG…ALQALRHPWV (258 aa). ATP contacts are provided by residues 104-112 and Lys-127; that span reads IGRGSFSRV. Asp-218 acts as the Proton acceptor in catalysis. Residues 378 to 407 are disordered; it reads RASSRCQSTKSAQSTRSSRSTRSNKSRRVR. A phosphoserine; by autocatalysis mark is found at Ser-380 and Ser-381. Low complexity predominate over residues 385–398; it reads STKSAQSTRSSRST.

The protein belongs to the protein kinase superfamily. CAMK Ser/Thr protein kinase family. Homodimer. In terms of processing, autophosphorylated on serine residues. Post-translationally, myristoylated. Required for membrane association. Prerequisite for palmitoylation to occur. Palmitoylated.

The protein resides in the golgi apparatus. Its subcellular location is the cytoplasm. It is found in the cytoskeleton. The protein localises to the microtubule organizing center. It localises to the centrosome. The protein resides in the nucleus speckle. Its subcellular location is the endoplasmic reticulum membrane. It is found in the cell membrane. The catalysed reaction is L-seryl-[protein] + ATP = O-phospho-L-seryl-[protein] + ADP + H(+). It catalyses the reaction L-threonyl-[protein] + ATP = O-phospho-L-threonyl-[protein] + ADP + H(+). Activity depends on Ca(2+) concentration. Functionally, may be a SFC-associated serine kinase (splicing factor compartment-associated serine kinase) with a role in intranuclear SR protein (non-snRNP splicing factors containing a serine/arginine-rich domain) trafficking and pre-mRNA processing. This Bos taurus (Bovine) protein is Serine/threonine-protein kinase H1 (PSKH1).